A 317-amino-acid chain; its full sequence is Aspartate carbamoyltransferase catalytic subunit (317 aa).

Residues R64 and T65 each contribute to the carbamoyl phosphate site. Position 92 (K92) interacts with L-aspartate. Carbamoyl phosphate is bound by residues R114, H142, and Q145. L-aspartate-binding residues include R176 and R230. The carbamoyl phosphate site is built by G271 and P272.

Belongs to the aspartate/ornithine carbamoyltransferase superfamily. ATCase family. Heterododecamer (2C3:3R2) of six catalytic PyrB chains organized as two trimers (C3), and six regulatory PyrI chains organized as three dimers (R2).

It carries out the reaction carbamoyl phosphate + L-aspartate = N-carbamoyl-L-aspartate + phosphate + H(+). It participates in pyrimidine metabolism; UMP biosynthesis via de novo pathway; (S)-dihydroorotate from bicarbonate: step 2/3. In terms of biological role, catalyzes the condensation of carbamoyl phosphate and aspartate to form carbamoyl aspartate and inorganic phosphate, the committed step in the de novo pyrimidine nucleotide biosynthesis pathway. The protein is Aspartate carbamoyltransferase catalytic subunit of Nitratidesulfovibrio vulgaris (strain DP4) (Desulfovibrio vulgaris).